The following is a 178-amino-acid chain: 6,7-dimethyl-8-ribityllumazine synthase (178 aa).

Residues F23, S61 to E63, and A85 to I87 each bind 5-amino-6-(D-ribitylamino)uracil. Q90–T91 lines the (2S)-2-hydroxy-3-oxobutyl phosphate pocket. H93 acts as the Proton donor in catalysis. Residue Y118 participates in 5-amino-6-(D-ribitylamino)uracil binding. R132 is a (2S)-2-hydroxy-3-oxobutyl phosphate binding site.

The protein belongs to the DMRL synthase family.

The enzyme catalyses (2S)-2-hydroxy-3-oxobutyl phosphate + 5-amino-6-(D-ribitylamino)uracil = 6,7-dimethyl-8-(1-D-ribityl)lumazine + phosphate + 2 H2O + H(+). It functions in the pathway cofactor biosynthesis; riboflavin biosynthesis; riboflavin from 2-hydroxy-3-oxobutyl phosphate and 5-amino-6-(D-ribitylamino)uracil: step 1/2. Its function is as follows. Catalyzes the formation of 6,7-dimethyl-8-ribityllumazine by condensation of 5-amino-6-(D-ribitylamino)uracil with 3,4-dihydroxy-2-butanone 4-phosphate. This is the penultimate step in the biosynthesis of riboflavin. The chain is 6,7-dimethyl-8-ribityllumazine synthase from Thermosynechococcus vestitus (strain NIES-2133 / IAM M-273 / BP-1).